We begin with the raw amino-acid sequence, 1127 residues long: Caprin-2 (1127 aa).

Positions 67-108 are disordered; the sequence is YQSPSGHSEEEREGNMKSAKPQVNHSQHGESQRALSPLQSTL. Over residues 99–108 the composition is skewed to polar residues; the sequence is RALSPLQSTL. Coiled coils occupy residues 129 to 156 and 194 to 216; these read LKHK…GEHL and AQKK…KLRT. Disordered stretches follow at residues 382–614, 642–753, and 922–975; these read NKQG…KDPV, DKPS…SSSV, and QCYK…PVDV. 2 stretches are compositionally biased toward basic and acidic residues: residues 402–432 and 440–464; these read KRWD…HQEV and EQRK…EISK. Polar residues-rich tracts occupy residues 512–531 and 544–567; these read PKSW…SWTT and TPKS…QISP. Residues 588–597 show a composition bias toward basic and acidic residues; it reads LNTEPKDVPK. 2 stretches are compositionally biased toward polar residues: residues 665–714 and 741–753; these read KEQN…TSET and QGFQ…SSSV. Phosphoserine is present on residues serine 948 and serine 949. Polar residues predominate over residues 956-970; it reads TFNSGDSGQGDSRSM. One can recognise a C1q domain in the interval 993-1127; the sequence is PQQMRVAFSA…TFSGYLLYQD (135 aa). Positions 1078 and 1084 each coordinate Ca(2+).

This sequence belongs to the caprin family. As to quaternary structure, homotrimer; via C1q domain. Found in a complex with LRP6, CCNY and CDK14 during G2/M stage; CAPRIN2 functions as a scaffold for the complex by binding to CCNY via its N terminus and to CDK14 via its C terminus. Interacts with LRP5. Interacts with LRP6. As to expression, detected in all tissues tested with highest levels of expression in brain and spleen.

It is found in the cytoplasm. Its subcellular location is the mitochondrion. It localises to the cell membrane. Functionally, promotes phosphorylation of the Wnt coreceptor LRP6, leading to increased activity of the canonical Wnt signaling pathway. Facilitates constitutive LRP6 phosphorylation by CDK14/CCNY during G2/M stage of the cell cycle, which may potentiate cells for Wnt signaling. May regulate the transport and translation of mRNAs, modulating for instance the expression of proteins involved in synaptic plasticity in neurons. Involved in regulation of growth as erythroblasts shift from a highly proliferative state towards their terminal phase of differentiation. May be involved in apoptosis. The chain is Caprin-2 from Homo sapiens (Human).